Reading from the N-terminus, the 314-residue chain is Small ribosomal subunit biogenesis GTPase RsgA (314 aa).

A disordered region spans residues 1–21 (MKRAPTKQPAKPAARGGERAQ). The CP-type G domain maps to 85 to 246 (SDQFKSKLFA…LIDSPGFQEF (162 aa)). Residues 134-137 (NKID) and 188-196 (GQSGMGKST) each bind GTP. Cysteine 270, cysteine 275, histidine 277, and cysteine 283 together coordinate Zn(2+).

It belongs to the TRAFAC class YlqF/YawG GTPase family. RsgA subfamily. Monomer. Associates with 30S ribosomal subunit, binds 16S rRNA. Zn(2+) is required as a cofactor.

Its subcellular location is the cytoplasm. Functionally, one of several proteins that assist in the late maturation steps of the functional core of the 30S ribosomal subunit. Helps release RbfA from mature subunits. May play a role in the assembly of ribosomal proteins into the subunit. Circularly permuted GTPase that catalyzes slow GTP hydrolysis, GTPase activity is stimulated by the 30S ribosomal subunit. This Burkholderia pseudomallei (strain 1710b) protein is Small ribosomal subunit biogenesis GTPase RsgA.